A 113-amino-acid chain; its full sequence is Iron-sulfur cluster insertion protein ErpA (113 aa).

Residues C41, C105, and C107 each contribute to the iron-sulfur cluster site.

Belongs to the HesB/IscA family. In terms of assembly, homodimer. Iron-sulfur cluster serves as cofactor.

Functionally, required for insertion of 4Fe-4S clusters for at least IspG. The chain is Iron-sulfur cluster insertion protein ErpA from Histophilus somni (strain 2336) (Haemophilus somnus).